A 280-amino-acid polypeptide reads, in one-letter code: NLP effector protein Pc553546 (280 aa).

The first 19 residues, Met1–Gly19, serve as a signal peptide directing secretion. Residues Ala123 to Ala129 carry the Hepta-peptide GHRHDWE motif motif. N-linked (GlcNAc...) asparagine glycosylation is found at Asn142 and Asn209.

This sequence belongs to the Necrosis inducing protein (NPP1) family.

The protein resides in the secreted. Its function is as follows. Secreted effector that contributes strongly to virulence during infection by P.capsici. In Phytophthora capsici, this protein is NLP effector protein Pc553546.